The chain runs to 168 residues: CASP-like protein 4D1 (168 aa).

The Cytoplasmic portion of the chain corresponds to Met1–Arg11. The chain crosses the membrane as a helical span at residues Met12–Leu32. The Extracellular portion of the chain corresponds to Thr33 to Arg57. A helical transmembrane segment spans residues Tyr58–Leu78. The Cytoplasmic portion of the chain corresponds to Tyr79–Asp97. The chain crosses the membrane as a helical span at residues Phe98–Ser118. Residues Thr119 to Ser144 are Extracellular-facing. A helical transmembrane segment spans residues Leu145–Pro165. The Cytoplasmic portion of the chain corresponds to Lys166–Val168.

The protein belongs to the Casparian strip membrane proteins (CASP) family. Homodimer and heterodimers.

The protein localises to the cell membrane. This is CASP-like protein 4D1 from Ricinus communis (Castor bean).